Consider the following 170-residue polypeptide: Adenine phosphoribosyltransferase (170 aa).

The protein belongs to the purine/pyrimidine phosphoribosyltransferase family. As to quaternary structure, homodimer.

The protein resides in the cytoplasm. It carries out the reaction AMP + diphosphate = 5-phospho-alpha-D-ribose 1-diphosphate + adenine. It participates in purine metabolism; AMP biosynthesis via salvage pathway; AMP from adenine: step 1/1. In terms of biological role, catalyzes a salvage reaction resulting in the formation of AMP, that is energically less costly than de novo synthesis. This chain is Adenine phosphoribosyltransferase, found in Mycoplasmopsis agalactiae (strain NCTC 10123 / CIP 59.7 / PG2) (Mycoplasma agalactiae).